A 217-amino-acid polypeptide reads, in one-letter code: Spore coat protein F-like protein YhcQ (217 aa).

Over residues M1 to Q11 the composition is skewed to low complexity. The interval M1–E28 is disordered.

The protein belongs to the CotF family.

The protein resides in the spore coat. The chain is Spore coat protein F-like protein YhcQ (yhcQ) from Bacillus subtilis (strain 168).